A 96-amino-acid chain; its full sequence is Co-chaperonin GroES (96 aa).

Belongs to the GroES chaperonin family. In terms of assembly, heptamer of 7 subunits arranged in a ring. Interacts with the chaperonin GroEL.

It is found in the cytoplasm. Together with the chaperonin GroEL, plays an essential role in assisting protein folding. The GroEL-GroES system forms a nano-cage that allows encapsulation of the non-native substrate proteins and provides a physical environment optimized to promote and accelerate protein folding. GroES binds to the apical surface of the GroEL ring, thereby capping the opening of the GroEL channel. The polypeptide is Co-chaperonin GroES (Solidesulfovibrio magneticus (strain ATCC 700980 / DSM 13731 / RS-1) (Desulfovibrio magneticus)).